A 427-amino-acid chain; its full sequence is Trigger factor (427 aa).

In terms of domain architecture, PPIase FKBP-type spans 163–248 (GDTVVIDFVG…VHEVKSKEVP (86 aa)).

Belongs to the FKBP-type PPIase family. Tig subfamily.

The protein resides in the cytoplasm. It carries out the reaction [protein]-peptidylproline (omega=180) = [protein]-peptidylproline (omega=0). In terms of biological role, involved in protein export. Acts as a chaperone by maintaining the newly synthesized protein in an open conformation. Functions as a peptidyl-prolyl cis-trans isomerase. This is Trigger factor from Streptococcus uberis (strain ATCC BAA-854 / 0140J).